We begin with the raw amino-acid sequence, 435 residues long: Serine hydroxymethyltransferase 2 (435 aa).

(6S)-5,6,7,8-tetrahydrofolate-binding positions include Leu-135 and 139 to 141 (GHL). Lys-244 is modified (N6-(pyridoxal phosphate)lysine). Residue Glu-260 coordinates (6S)-5,6,7,8-tetrahydrofolate.

The protein belongs to the SHMT family. Homodimer. The cofactor is pyridoxal 5'-phosphate.

It is found in the cytoplasm. It catalyses the reaction (6R)-5,10-methylene-5,6,7,8-tetrahydrofolate + glycine + H2O = (6S)-5,6,7,8-tetrahydrofolate + L-serine. It participates in one-carbon metabolism; tetrahydrofolate interconversion. The protein operates within amino-acid biosynthesis; glycine biosynthesis; glycine from L-serine: step 1/1. Functionally, catalyzes the reversible interconversion of serine and glycine with tetrahydrofolate (THF) serving as the one-carbon carrier. This reaction serves as the major source of one-carbon groups required for the biosynthesis of purines, thymidylate, methionine, and other important biomolecules. Also exhibits THF-independent aldolase activity toward beta-hydroxyamino acids, producing glycine and aldehydes, via a retro-aldol mechanism. This is Serine hydroxymethyltransferase 2 from Vibrio cholerae serotype O1 (strain ATCC 39315 / El Tor Inaba N16961).